Reading from the N-terminus, the 184-residue chain is Putative tetraheme cytochrome-c type (184 aa).

At 1 to 14 (MSKHAASSAKRFSL) the chain is on the cytoplasmic side. A helical transmembrane segment spans residues 15 to 35 (LALGLMFVGGIVFVWAVDFGI). Over 36 to 184 (KTTNTLEFCT…HEPTEPDDAS (149 aa)) the chain is Periplasmic. Heme is bound by residues cysteine 44, cysteine 47, methionine 50, cysteine 73, cysteine 76, and histidine 77. Lysine 89 and aspartate 95 together coordinate substrate. Heme contacts are provided by aspartate 95, cysteine 133, cysteine 136, histidine 137, cysteine 165, cysteine 168, histidine 169, and histidine 174.

This sequence belongs to the NapC/NirT/NrfH family. In terms of processing, binds 4 heme groups per subunit.

It localises to the cell inner membrane. In Allochromatium vinosum (strain ATCC 17899 / DSM 180 / NBRC 103801 / NCIMB 10441 / D) (Chromatium vinosum), this protein is Putative tetraheme cytochrome-c type.